A 156-amino-acid polypeptide reads, in one-letter code: ATP synthase subunit b (156 aa).

The helical transmembrane segment at 5 to 25 threads the bilayer; it reads LTLIGQAIAFAVFVWFCMKFV.

Belongs to the ATPase B chain family. As to quaternary structure, F-type ATPases have 2 components, F(1) - the catalytic core - and F(0) - the membrane proton channel. F(1) has five subunits: alpha(3), beta(3), gamma(1), delta(1), epsilon(1). F(0) has three main subunits: a(1), b(2) and c(10-14). The alpha and beta chains form an alternating ring which encloses part of the gamma chain. F(1) is attached to F(0) by a central stalk formed by the gamma and epsilon chains, while a peripheral stalk is formed by the delta and b chains.

The protein resides in the cell inner membrane. F(1)F(0) ATP synthase produces ATP from ADP in the presence of a proton or sodium gradient. F-type ATPases consist of two structural domains, F(1) containing the extramembraneous catalytic core and F(0) containing the membrane proton channel, linked together by a central stalk and a peripheral stalk. During catalysis, ATP synthesis in the catalytic domain of F(1) is coupled via a rotary mechanism of the central stalk subunits to proton translocation. Functionally, component of the F(0) channel, it forms part of the peripheral stalk, linking F(1) to F(0). This chain is ATP synthase subunit b, found in Chromohalobacter salexigens (strain ATCC BAA-138 / DSM 3043 / CIP 106854 / NCIMB 13768 / 1H11).